The chain runs to 258 residues: Heat-labile enterotoxin A chain (258 aa).

Positions 1 to 18 (MKNITFIFFILLASPLYA) are cleaved as a signal peptide. Residue 25–39 (RADSRPPDEIKRSGG) participates in NAD(+) binding. Glu130 is a catalytic residue. Cysteines 205 and 217 form a disulfide.

It belongs to the enterotoxin A family. As to quaternary structure, heterohexamer of one A chain and of five B chains.

The biological activity of the toxin is produced by the A chain, which activates intracellular adenyl cyclase. This chain is Heat-labile enterotoxin A chain (eltA), found in Escherichia coli.